The sequence spans 488 residues: Argininosuccinate lyase 2 (488 aa).

It belongs to the lyase 1 family. Argininosuccinate lyase subfamily.

It localises to the cytoplasm. The catalysed reaction is 2-(N(omega)-L-arginino)succinate = fumarate + L-arginine. The protein operates within amino-acid biosynthesis; L-arginine biosynthesis; L-arginine from L-ornithine and carbamoyl phosphate: step 3/3. The sequence is that of Argininosuccinate lyase 2 from Rhizobium meliloti (strain 1021) (Ensifer meliloti).